Here is a 218-residue protein sequence, read N- to C-terminus: Glutathione S-transferase Mu 4 (218 aa).

One can recognise a GST N-terminal domain in the interval methionine 1–glycine 88. Residues tyrosine 7–tryptophan 8, tryptophan 46–lysine 50, asparagine 59–leucine 60, and glutamine 72–serine 73 contribute to the glutathione site. Positions threonine 90–leucine 208 constitute a GST C-terminal domain. Tyrosine 116 is a substrate binding site.

Belongs to the GST superfamily. Mu family. In terms of assembly, homodimer. In terms of tissue distribution, widely expressed.

The protein resides in the cytoplasm. It catalyses the reaction RX + glutathione = an S-substituted glutathione + a halide anion + H(+). It carries out the reaction 1-chloro-2,4-dinitrobenzene + glutathione = 2,4-dinitrophenyl-S-glutathione + chloride + H(+). The catalysed reaction is (13S,14S)-epoxy-(4Z,7Z,9E,11E,16Z,19Z)-docosahexaenoate + glutathione = (13R)-S-glutathionyl-(14S)-hydroxy-(4Z,7Z,9E,11E,16Z,19Z)-docosahexaenoate. The enzyme catalyses leukotriene C4 = leukotriene A4 + glutathione. Conjugation of reduced glutathione to a wide number of exogenous and endogenous hydrophobic electrophiles. Catalyzes the conjugation of leukotriene A4 with reduced glutathione (GSH) to form leukotriene C4. Can also catalyze the transfer of a glutathionyl group from glutathione (GSH) to 13(S),14(S)-epoxy-docosahexaenoic acid to form maresin conjugate in tissue regeneration 1 (MCTR1), a bioactive lipid mediator that possess potent anti-inflammatory and proresolving actions. The sequence is that of Glutathione S-transferase Mu 4 from Mus musculus (Mouse).